A 501-amino-acid polypeptide reads, in one-letter code: L-ornithine N(5)-monooxygenase (501 aa).

The segment at 1 to 31 (MESVERKSESSYLGMRNMQPEQRLSLDPPRL) is disordered. Residues 83 to 91 (ERQKQFAWH) and Gln102 contribute to the FAD site. Substrate is bound at residue Lys107. Val168 is a binding site for FAD. NADP(+) is bound by residues 254 to 257 (SGQS) and Arg279. Substrate contacts are provided by residues 293 to 296 (NEIF) and Asn323. 323–325 (NYS) provides a ligand contact to NADP(+). Residues 366–390 (EHHGPQSRMRIHLKSSKPESEGAAN) form a disordered region. The span at 381 to 390 (SKPESEGAAN) shows a compositional bias: basic and acidic residues. Residue 466–468 (SLL) participates in FAD binding. Residue Ser469 participates in substrate binding.

Belongs to the lysine N(6)-hydroxylase/L-ornithine N(5)-oxygenase family. As to quaternary structure, homotetramer. It depends on FAD as a cofactor.

It catalyses the reaction L-ornithine + NADPH + O2 = N(5)-hydroxy-L-ornithine + NADP(+) + H2O. The catalysed reaction is L-ornithine + NADH + O2 = N(5)-hydroxy-L-ornithine + NAD(+) + H2O. Its pathway is siderophore biosynthesis; ferrichrome biosynthesis. Its function is as follows. L-ornithine N(5)-monooxygenase; part of the siderophore biosynthetic pathway. Aspergillus fumigatus produces four types of siderophores, low-molecular-mass iron chelators, including excreted fusarinine C (FsC) and triacetylfusarinine C (TAFC) for iron uptake; and intacellular ferricrocin (FC) for hyphal and hydroxyferricrocin (HFC) for conidial iron distribution and storage. TAFC consists of three N(2)-acetyl-N(5)-anhydromevalonyl-N(5)-hydroxyornithine residues cyclically linked by ester bonds; FC is a cyclic hexapeptide with the structure Gly-Ser-Gly-(N(5)-acetyl-N(5)-hydroxyornithine)x3. The biosynthesis of all four siderophores depends on the hydroxylation of ornithine, catalyzed by the monooxygenase sidA. SidA is highly specific for its substrate, only hydrolyzing l-ornithine, and has preference for NADPH over NADH, NADPH playing a role in stabilization of the C4a-hydroperoxyflavin intermediate. Subsequently, the pathways for biosynthesis of extra- and intracellular siderophores split. For biosynthesis of extracellular siderophores, the transacylase sidF transfers anhydromevalonyl to N(5)-hydroxyornithine. The required anhydromevalonyl-CoA moiety is derived from mevalonate by CoA ligation and dehydration catalyzed by sidI and sidH respectively. The acetylation of N(5)-hydroxyornithine for FC biosynthesis involves the constitutively expressed sidL. FC is hydroxylated to HFC by an as yet uncharacterized enzyme during conidiation. Assembly of fusarinine C (FsC) and FC is catalyzed by two different nonribosomal peptide synthetases (NRPS), sidD and sidC respectively. Subsequently, sidG catalyzes N2-acetylation of FsC for forming TAFC. Both extra- and intracellular siderophores are crucial for growth during iron limitation and virulence. This chain is L-ornithine N(5)-monooxygenase, found in Aspergillus fumigatus (strain ATCC MYA-4609 / CBS 101355 / FGSC A1100 / Af293) (Neosartorya fumigata).